A 147-amino-acid polypeptide reads, in one-letter code: Large ribosomal subunit protein bL9 (147 aa).

Belongs to the bacterial ribosomal protein bL9 family.

Its function is as follows. Binds to the 23S rRNA. In Halothermothrix orenii (strain H 168 / OCM 544 / DSM 9562), this protein is Large ribosomal subunit protein bL9.